A 301-amino-acid chain; its full sequence is Beta carbonic anhydrase 5, chloroplastic (301 aa).

Residues 1–56 (MAATPTHFSVSHDPFSSTSLLNLQTQAIFGPNHSLKTTQLRIPASFRRKATNLQVM) constitute a chloroplast transit peptide. Phosphothreonine is present on threonine 65. Serine 128 bears the Phosphoserine mark. Residue cysteine 231 is modified to S-nitrosocysteine.

Belongs to the beta-class carbonic anhydrase family. In terms of tissue distribution, strongly expressed in aerial tissues including leaves, stems, flowers and siliques.

It localises to the plastid. It is found in the chloroplast. The catalysed reaction is hydrogencarbonate + H(+) = CO2 + H2O. In terms of biological role, reversible hydration of carbon dioxide. The chain is Beta carbonic anhydrase 5, chloroplastic (BCA5) from Arabidopsis thaliana (Mouse-ear cress).